The chain runs to 671 residues: DNA ligase (671 aa).

NAD(+) contacts are provided by residues 36-40 (DHVYD), 85-86 (SM), and Glu-115. The N6-AMP-lysine intermediate role is filled by Lys-117. NAD(+) is bound by residues Arg-138, Glu-172, Lys-287, and Lys-311. Positions 405, 408, 423, and 428 each coordinate Zn(2+). The BRCT domain maps to 588–671 (AADNFFKGKT…SKIEEKDTEK (84 aa)).

The protein belongs to the NAD-dependent DNA ligase family. LigA subfamily. It depends on Mg(2+) as a cofactor. The cofactor is Mn(2+).

It carries out the reaction NAD(+) + (deoxyribonucleotide)n-3'-hydroxyl + 5'-phospho-(deoxyribonucleotide)m = (deoxyribonucleotide)n+m + AMP + beta-nicotinamide D-nucleotide.. In terms of biological role, DNA ligase that catalyzes the formation of phosphodiester linkages between 5'-phosphoryl and 3'-hydroxyl groups in double-stranded DNA using NAD as a coenzyme and as the energy source for the reaction. It is essential for DNA replication and repair of damaged DNA. This chain is DNA ligase, found in Lactobacillus delbrueckii subsp. bulgaricus (strain ATCC 11842 / DSM 20081 / BCRC 10696 / JCM 1002 / NBRC 13953 / NCIMB 11778 / NCTC 12712 / WDCM 00102 / Lb 14).